A 98-amino-acid chain; its full sequence is Large ribosomal subunit protein uL23 (98 aa).

The protein belongs to the universal ribosomal protein uL23 family. Part of the 50S ribosomal subunit. Contacts protein L29, and trigger factor when it is bound to the ribosome.

One of the early assembly proteins it binds 23S rRNA. One of the proteins that surrounds the polypeptide exit tunnel on the outside of the ribosome. Forms the main docking site for trigger factor binding to the ribosome. This chain is Large ribosomal subunit protein uL23, found in Methylobacterium radiotolerans (strain ATCC 27329 / DSM 1819 / JCM 2831 / NBRC 15690 / NCIMB 10815 / 0-1).